The sequence spans 639 residues: Threonine--tRNA ligase (639 aa).

In terms of domain architecture, TGS spans 1–61 (MIHITLPDGS…TADCRLSIIT (61 aa)). Residues 242–533 (DHRKLGRELD…LLEQHAGALP (292 aa)) are catalytic. 3 residues coordinate Zn(2+): Cys333, His384, and His510.

The protein belongs to the class-II aminoacyl-tRNA synthetase family. As to quaternary structure, homodimer. The cofactor is Zn(2+).

The protein localises to the cytoplasm. It catalyses the reaction tRNA(Thr) + L-threonine + ATP = L-threonyl-tRNA(Thr) + AMP + diphosphate + H(+). Functionally, catalyzes the attachment of threonine to tRNA(Thr) in a two-step reaction: L-threonine is first activated by ATP to form Thr-AMP and then transferred to the acceptor end of tRNA(Thr). Also edits incorrectly charged L-seryl-tRNA(Thr). This is Threonine--tRNA ligase from Verminephrobacter eiseniae (strain EF01-2).